The primary structure comprises 69 residues: Cold shock protein CapB (69 aa).

The 60-residue stretch at 7 to 66 (GTVKWFNDEKGFGFITPQSGDDLFVHFKAIQSDGFKSLKEGQQVSFIATRGQKGMQAEEV) folds into the CSD domain.

It is found in the cytoplasm. Its function is as follows. Affects cell viability at low temperatures. The protein is Cold shock protein CapB (capB) of Pseudomonas fragi.